A 303-amino-acid polypeptide reads, in one-letter code: N-acetylmuramic acid 6-phosphate etherase (303 aa).

Residues Ala60–Lys223 enclose the SIS domain. Glu88 functions as the Proton donor in the catalytic mechanism. The active site involves Glu119.

It belongs to the GCKR-like family. MurNAc-6-P etherase subfamily. In terms of assembly, homodimer.

The catalysed reaction is N-acetyl-D-muramate 6-phosphate + H2O = N-acetyl-D-glucosamine 6-phosphate + (R)-lactate. It participates in amino-sugar metabolism; 1,6-anhydro-N-acetylmuramate degradation. Its pathway is amino-sugar metabolism; N-acetylmuramate degradation. It functions in the pathway cell wall biogenesis; peptidoglycan recycling. Its function is as follows. Specifically catalyzes the cleavage of the D-lactyl ether substituent of MurNAc 6-phosphate, producing GlcNAc 6-phosphate and D-lactate. Together with AnmK, is also required for the utilization of anhydro-N-acetylmuramic acid (anhMurNAc) either imported from the medium or derived from its own cell wall murein, and thus plays a role in cell wall recycling. The polypeptide is N-acetylmuramic acid 6-phosphate etherase (Pectobacterium atrosepticum (strain SCRI 1043 / ATCC BAA-672) (Erwinia carotovora subsp. atroseptica)).